The following is a 276-amino-acid chain: MVLIEFLTGFFYLYGKRLFSISKVMDMICLDYYTIIPAPLAMMLAARLKNYDLMKRLHEWEISVDYALLVVDDVPSIDFCLSLGAKSPTRAQKRELLRDNTFNPVYKYLMNCSGFPTKREKNIPCDVQCERLQKNIIKELVFNCSVLLEMVLHTEREYAYALHCAAKHNQLPILMYCWQQSTDAESILLKTCCSDKNINCFNYCILYGGAQNLDAAMVEAAKHDARMLINYCVMLGGRSLNEAKETAAMFGHIECAQHCFKLQSYVMDTLNVDETD.

Belongs to the asfivirus MGF 360 family.

Functionally, plays a role in virus cell tropism, and may be required for efficient virus replication in macrophages. This African swine fever virus (isolate Warthog/Namibia/Wart80/1980) (ASFV) protein is Protein MGF 360-15R.